Reading from the N-terminus, the 67-residue chain is Small ribosomal subunit protein bS21 (67 aa).

This sequence belongs to the bacterial ribosomal protein bS21 family.

In Paramagnetospirillum magneticum (strain ATCC 700264 / AMB-1) (Magnetospirillum magneticum), this protein is Small ribosomal subunit protein bS21.